The chain runs to 373 residues: Lipoyl synthase, mitochondrial (373 aa).

The transit peptide at 1–26 directs the protein to the mitochondrion; sequence MALRCWDAARSLGSRIFGRYACSVRA. The [4Fe-4S] cluster site is built by C105, C110, C116, C136, C140, C143, and S351. Residues 121–340 form the Radical SAM core domain; sequence EYATATATIM…EEVGNELGFH (220 aa).

This sequence belongs to the radical SAM superfamily. Lipoyl synthase family. [4Fe-4S] cluster is required as a cofactor.

Its subcellular location is the mitochondrion. It catalyses the reaction [[Fe-S] cluster scaffold protein carrying a second [4Fe-4S](2+) cluster] + N(6)-octanoyl-L-lysyl-[protein] + 2 oxidized [2Fe-2S]-[ferredoxin] + 2 S-adenosyl-L-methionine + 4 H(+) = [[Fe-S] cluster scaffold protein] + N(6)-[(R)-dihydrolipoyl]-L-lysyl-[protein] + 4 Fe(3+) + 2 hydrogen sulfide + 2 5'-deoxyadenosine + 2 L-methionine + 2 reduced [2Fe-2S]-[ferredoxin]. It functions in the pathway protein modification; protein lipoylation via endogenous pathway; protein N(6)-(lipoyl)lysine from octanoyl-[acyl-carrier-protein]: step 2/2. Catalyzes the radical-mediated insertion of two sulfur atoms into the C-6 and C-8 positions of the octanoyl moiety bound to the lipoyl domains of lipoate-dependent enzymes, thereby converting the octanoylated domains into lipoylated derivatives. The polypeptide is Lipoyl synthase, mitochondrial (Lias) (Rattus norvegicus (Rat)).